Here is a 271-residue protein sequence, read N- to C-terminus: Tryptophan synthase alpha chain (271 aa).

Active-site proton acceptor residues include E49 and D60.

Belongs to the TrpA family. Tetramer of two alpha and two beta chains.

It carries out the reaction (1S,2R)-1-C-(indol-3-yl)glycerol 3-phosphate + L-serine = D-glyceraldehyde 3-phosphate + L-tryptophan + H2O. The protein operates within amino-acid biosynthesis; L-tryptophan biosynthesis; L-tryptophan from chorismate: step 5/5. The alpha subunit is responsible for the aldol cleavage of indoleglycerol phosphate to indole and glyceraldehyde 3-phosphate. This chain is Tryptophan synthase alpha chain, found in Blochmanniella floridana.